Here is a 341-residue protein sequence, read N- to C-terminus: Tryptophan--tRNA ligase (341 aa).

ATP contacts are provided by residues 11–13 and 19–20; these read RPT and GH. Residues 12-20 carry the 'HIGH' region motif; sequence PTGKLHIGH. Asp140 is a binding site for L-tryptophan. ATP contacts are provided by residues 152 to 154, Leu194, and 202 to 206; these read GTD and KMSKS. The 'KMSKS' region motif lies at 202–206; that stretch reads KMSKS.

The protein belongs to the class-I aminoacyl-tRNA synthetase family. As to quaternary structure, homodimer.

It is found in the cytoplasm. It catalyses the reaction tRNA(Trp) + L-tryptophan + ATP = L-tryptophyl-tRNA(Trp) + AMP + diphosphate + H(+). Functionally, catalyzes the attachment of tryptophan to tRNA(Trp). This chain is Tryptophan--tRNA ligase, found in Streptococcus agalactiae serotype III (strain NEM316).